The following is a 532-amino-acid chain: Phosphoenolpyruvate carboxykinase (ATP) (532 aa).

Substrate contacts are provided by arginine 60, tyrosine 194, and lysine 200. Residues lysine 200, histidine 219, and 237 to 245 each bind ATP; that span reads GLSGTGKTT. Mn(2+) is bound by residues lysine 200 and histidine 219. Aspartate 258 contributes to the Mn(2+) binding site. ATP contacts are provided by glutamate 286, arginine 324, and threonine 449. Arginine 324 serves as a coordination point for substrate.

The protein belongs to the phosphoenolpyruvate carboxykinase (ATP) family. It depends on Mn(2+) as a cofactor.

It is found in the cytoplasm. It carries out the reaction oxaloacetate + ATP = phosphoenolpyruvate + ADP + CO2. The protein operates within carbohydrate biosynthesis; gluconeogenesis. Involved in the gluconeogenesis. Catalyzes the conversion of oxaloacetate (OAA) to phosphoenolpyruvate (PEP) through direct phosphoryl transfer between the nucleoside triphosphate and OAA. In Cereibacter sphaeroides (strain ATCC 17029 / ATH 2.4.9) (Rhodobacter sphaeroides), this protein is Phosphoenolpyruvate carboxykinase (ATP).